A 608-amino-acid polypeptide reads, in one-letter code: uncharacterized protein (608 aa).

A disordered region spans residues 1-21; sequence MHTNSPLRADNQDLETQPLLR. The residue at position 24 (threonine 24) is a Phosphothreonine. Phosphoserine is present on serine 27. Residues 55 to 75 traverse the membrane as a helical segment; the sequence is IIYLLGIVLLSFFGVSIVQYI. Asparagine 115, asparagine 141, asparagine 169, asparagine 407, asparagine 425, asparagine 449, asparagine 453, asparagine 527, and asparagine 580 each carry an N-linked (GlcNAc...) asparagine glycan.

It is found in the membrane. This is an uncharacterized protein from Saccharomyces cerevisiae (strain ATCC 204508 / S288c) (Baker's yeast).